Reading from the N-terminus, the 804-residue chain is Elongation factor G, mitochondrial (804 aa).

A mitochondrion-targeting transit peptide spans 1–63; that stretch reads MSMHRVARAV…RHFFQSPIIR (63 aa). Residues 99–385 enclose the tr-type G domain; the sequence is RRVRNIGIAA…AVCDYLPNPA (287 aa). Residues 108 to 115, 183 to 187, and 237 to 240 contribute to the GTP site; these read AHIDSGKT, DTPGH, and NKMD.

Belongs to the TRAFAC class translation factor GTPase superfamily. Classic translation factor GTPase family. EF-G/EF-2 subfamily.

The protein resides in the mitochondrion. It functions in the pathway protein biosynthesis; polypeptide chain elongation. In terms of biological role, mitochondrial GTPase that catalyzes the GTP-dependent ribosomal translocation step during translation elongation. During this step, the ribosome changes from the pre-translocational (PRE) to the post-translocational (POST) state as the newly formed A-site-bound peptidyl-tRNA and P-site-bound deacylated tRNA move to the P and E sites, respectively. Catalyzes the coordinated movement of the two tRNA molecules, the mRNA and conformational changes in the ribosome. In Sclerotinia sclerotiorum (strain ATCC 18683 / 1980 / Ss-1) (White mold), this protein is Elongation factor G, mitochondrial (mef1).